Reading from the N-terminus, the 163-residue chain is HTH-type transcriptional regulator IscR (163 aa).

Residues 2-131 enclose the HTH rrf2-type domain; sequence RLTSKGRYAV…NNITLGELVN (130 aa). Residues 28–51 constitute a DNA-binding region (H-T-H motif); sequence LADISERQGISLSYLEQLFSRLRK. The [2Fe-2S] cluster site is built by C92, C98, and C104. Residues 140 to 149 are compositionally biased toward basic and acidic residues; that stretch reads DRQHTHDAPR. The disordered stretch occupies residues 140 to 163; it reads DRQHTHDAPRSTRTQDAIDVKLRA.

It depends on [2Fe-2S] cluster as a cofactor.

Its function is as follows. Regulates the transcription of several operons and genes involved in the biogenesis of Fe-S clusters and Fe-S-containing proteins. This Citrobacter koseri (strain ATCC BAA-895 / CDC 4225-83 / SGSC4696) protein is HTH-type transcriptional regulator IscR.